Reading from the N-terminus, the 726-residue chain is Transcription factor 12 (726 aa).

Disordered stretches follow at residues 27-75 (SPPV…SRGF), 89-223 (LVSH…TFFD), 243-267 (YGGM…HSHD), 289-309 (SSFH…HTPP), 345-367 (PDHT…SPLA), 380-409 (TASG…YENS), 501-532 (MGSV…SSEL), 558-624 (VENQ…ERRM), and 694-726 (EEEK…MGHL). Polar residues predominate over residues 29-47 (PVNSGKNRPTTLGSSQFTA). The span at 55–74 (SQASWASGGQSSPSFESSRG) shows a compositional bias: low complexity. Polar residues-rich tracts occupy residues 145–157 (PGKS…SYTG), 249–263 (GSSS…YSNL), and 291–309 (FHRS…HTPP). Low complexity predominate over residues 348 to 359 (TSSSFPSNPSTP). 2 stretches are compositionally biased toward polar residues: residues 389-409 (GTTQ…YENS) and 510-532 (GSLN…SSEL). The segment covering 559-575 (ENQDKDDMHDSHASDDL) has biased composition (basic and acidic residues). The span at 592–603 (SSRPSCELSCSS) shows a compositional bias: low complexity. The segment covering 612–624 (PEQKAERERERRM) has biased composition (basic and acidic residues). In terms of domain architecture, bHLH spans 621–674 (ERRMANNARERLRVRDINEAFKELGRMCQLHLKSEKPQTKLLILHQAVAVILSL). The segment at 676 to 699 (QQVRERNLNPKAACLKRREEEKVS) is class A specific domain. Residues 717–726 (TDTSNPMGHL) show a composition bias toward polar residues.

In terms of assembly, efficient DNA binding requires dimerization with another bHLH protein.

Its subcellular location is the nucleus. Functionally, transcriptional regulator. Involved in the initiation of neuronal differentiation. Activates transcription by binding to the E box (5'-CANNTG-3'). May be involved in the functional network that regulates the development of the GnRH axis. This chain is Transcription factor 12 (tcf12), found in Danio rerio (Zebrafish).